A 257-amino-acid chain; its full sequence is Imidazole glycerol phosphate synthase subunit HisF (257 aa).

Active-site residues include D12 and D131.

This sequence belongs to the HisA/HisF family. In terms of assembly, heterodimer of HisH and HisF.

Its subcellular location is the cytoplasm. The enzyme catalyses 5-[(5-phospho-1-deoxy-D-ribulos-1-ylimino)methylamino]-1-(5-phospho-beta-D-ribosyl)imidazole-4-carboxamide + L-glutamine = D-erythro-1-(imidazol-4-yl)glycerol 3-phosphate + 5-amino-1-(5-phospho-beta-D-ribosyl)imidazole-4-carboxamide + L-glutamate + H(+). It functions in the pathway amino-acid biosynthesis; L-histidine biosynthesis; L-histidine from 5-phospho-alpha-D-ribose 1-diphosphate: step 5/9. In terms of biological role, IGPS catalyzes the conversion of PRFAR and glutamine to IGP, AICAR and glutamate. The HisF subunit catalyzes the cyclization activity that produces IGP and AICAR from PRFAR using the ammonia provided by the HisH subunit. The polypeptide is Imidazole glycerol phosphate synthase subunit HisF (Burkholderia thailandensis (strain ATCC 700388 / DSM 13276 / CCUG 48851 / CIP 106301 / E264)).